We begin with the raw amino-acid sequence, 266 residues long: 22 kDa alpha-zein 14 (266 aa).

A signal peptide spans 1 to 21 (MATKILSLLALLALFASATNA).

It belongs to the zein family.

In terms of biological role, zeins are major seed storage proteins. This chain is 22 kDa alpha-zein 14, found in Zea mays (Maize).